A 235-amino-acid polypeptide reads, in one-letter code: Phosphoribosylaminoimidazole-succinocarboxamide synthase (235 aa).

It belongs to the SAICAR synthetase family.

It carries out the reaction 5-amino-1-(5-phospho-D-ribosyl)imidazole-4-carboxylate + L-aspartate + ATP = (2S)-2-[5-amino-1-(5-phospho-beta-D-ribosyl)imidazole-4-carboxamido]succinate + ADP + phosphate + 2 H(+). It participates in purine metabolism; IMP biosynthesis via de novo pathway; 5-amino-1-(5-phospho-D-ribosyl)imidazole-4-carboxamide from 5-amino-1-(5-phospho-D-ribosyl)imidazole-4-carboxylate: step 1/2. The polypeptide is Phosphoribosylaminoimidazole-succinocarboxamide synthase (Chlorobaculum parvum (strain DSM 263 / NCIMB 8327) (Chlorobium vibrioforme subsp. thiosulfatophilum)).